The following is a 239-amino-acid chain: Small ribosomal subunit protein uS3 (239 aa).

The 69-residue stretch at 39-107 folds into the KH type-2 domain; the sequence is VRQVLRKKMS…SVHINVIEVR (69 aa). The segment at 217-239 is disordered; that stretch reads KQDDISRGDRNADRSSRRSREVR.

It belongs to the universal ribosomal protein uS3 family. In terms of assembly, part of the 30S ribosomal subunit. Forms a tight complex with proteins S10 and S14.

In terms of biological role, binds the lower part of the 30S subunit head. Binds mRNA in the 70S ribosome, positioning it for translation. The chain is Small ribosomal subunit protein uS3 from Xylella fastidiosa (strain 9a5c).